The chain runs to 130 residues: Small ribosomal subunit protein uS11 (130 aa).

This sequence belongs to the universal ribosomal protein uS11 family. In terms of assembly, part of the 30S ribosomal subunit. Interacts with proteins S7 and S18. Binds to IF-3.

In terms of biological role, located on the platform of the 30S subunit, it bridges several disparate RNA helices of the 16S rRNA. Forms part of the Shine-Dalgarno cleft in the 70S ribosome. This Dehalococcoides mccartyi (strain ATCC BAA-2266 / KCTC 15142 / 195) (Dehalococcoides ethenogenes (strain 195)) protein is Small ribosomal subunit protein uS11.